Reading from the N-terminus, the 394-residue chain is ORC1-type DNA replication protein 3 (394 aa).

Residues 66 to 70 and Tyr207 each bind ATP; that span reads TGKTF.

It belongs to the CDC6/cdc18 family. In terms of assembly, monomer. Interacts with Cdc6-1, Cdc6-2, MCM and PolB1.

Functionally, involved in regulation of DNA replication. May play essential roles in origin recognition and cell cycle control of replication. Binds to DNA, with a preference for molecules that contain a bubble, a fork, or a tail. Inhibits the binding of the MCM helicase to the origin DNA and inhibits its DNA helicase activity. Also regulates the DNA polymerase and the nuclease activities of PolB1. Inhibits the DNA-binding activity of Cdc6-1 and Cdc6-2. The protein is ORC1-type DNA replication protein 3 (cdc6-3) of Saccharolobus solfataricus (strain ATCC 35092 / DSM 1617 / JCM 11322 / P2) (Sulfolobus solfataricus).